We begin with the raw amino-acid sequence, 145 residues long: Hemoglobin subunit beta (145 aa).

One can recognise a Globin domain in the interval 1 to 145 (MLTAEEKAAV…VANALAHRYH (145 aa)). A Phosphothreonine modification is found at threonine 11. Residue serine 43 is modified to Phosphoserine. Lysine 58 is subject to N6-acetyllysine. Residue histidine 62 coordinates heme b. The residue at position 81 (lysine 81) is an N6-acetyllysine. Histidine 91 provides a ligand contact to heme b. Cysteine 92 is modified (S-nitrosocysteine).

The protein belongs to the globin family. Heterotetramer of two alpha chains and two beta chains. Red blood cells.

Functionally, involved in oxygen transport from the lung to the various peripheral tissues. In terms of biological role, functions as an endogenous inhibitor of enkephalin-degrading enzymes such as DPP3, and may thereby play a role as a regulator of pain and inflammation. The sequence is that of Hemoglobin subunit beta (HBB) from Bos taurus (Bovine).